The sequence spans 319 residues: Thioredoxin reductase (319 aa).

37–44 (ERGVPGGQ) provides a ligand contact to FAD. A disulfide bond links Cys136 and Cys139. 279 to 288 (DVRAKSLRQI) serves as a coordination point for FAD.

This sequence belongs to the class-II pyridine nucleotide-disulfide oxidoreductase family. Homodimer. FAD is required as a cofactor.

The protein localises to the cytoplasm. The catalysed reaction is [thioredoxin]-dithiol + NADP(+) = [thioredoxin]-disulfide + NADPH + H(+). This Listeria innocua serovar 6a (strain ATCC BAA-680 / CLIP 11262) protein is Thioredoxin reductase (trxB).